The sequence spans 597 residues: Probable serine/threonine-protein kinase DDB_G0281745 (597 aa).

The segment covering 49 to 61 (TIDNSNGKQSTTP) has biased composition (polar residues). Positions 49–320 (TIDNSNGKQS…RNNESTATTA (272 aa)) are disordered. A compositionally biased stretch (pro residues) spans 72-97 (QPPPQQSQQQPPQPLKPIPATRPVPT). Residues 114–140 (TLPTTNSSTKYSTLPSRQFFEVSSSPG) are compositionally biased toward polar residues. The span at 157–168 (SLSSNQNGSNLN) shows a compositional bias: low complexity. The segment covering 208 to 234 (PSPPSPPLQSPQPTPQQQPPPLKPIPQ) has biased composition (pro residues). Over residues 235 to 264 (PQQQQQQQQQQQQQQQQQQQQQQQQQQQQQ) the composition is skewed to low complexity. The span at 265–274 (QPPPLKPIPQ) shows a compositional bias: pro residues. The span at 275 to 301 (PQQSQPTQPIKSQIQIPITNTNGNTNG) shows a compositional bias: low complexity. In terms of domain architecture, Protein kinase spans 334-585 (KFVGNEIGSG…KVLDTIQNIY (252 aa)). Residues 340-348 (IGSGKYGSV) and Lys361 each bind ATP. Catalysis depends on Asp454, which acts as the Proton acceptor.

It belongs to the protein kinase superfamily. TKL Ser/Thr protein kinase family.

The enzyme catalyses L-seryl-[protein] + ATP = O-phospho-L-seryl-[protein] + ADP + H(+). It catalyses the reaction L-threonyl-[protein] + ATP = O-phospho-L-threonyl-[protein] + ADP + H(+). The chain is Probable serine/threonine-protein kinase DDB_G0281745 from Dictyostelium discoideum (Social amoeba).